Here is a 249-residue protein sequence, read N- to C-terminus: tRNA (guanine-N(1)-)-methyltransferase (249 aa).

Residues glycine 112 and 132–137 (LGDFVL) contribute to the S-adenosyl-L-methionine site.

Belongs to the RNA methyltransferase TrmD family. Homodimer.

It localises to the cytoplasm. The catalysed reaction is guanosine(37) in tRNA + S-adenosyl-L-methionine = N(1)-methylguanosine(37) in tRNA + S-adenosyl-L-homocysteine + H(+). In terms of biological role, specifically methylates guanosine-37 in various tRNAs. This Geobacter sp. (strain M21) protein is tRNA (guanine-N(1)-)-methyltransferase.